Here is a 409-residue protein sequence, read N- to C-terminus: L-cysteine:1D-myo-inositol 2-amino-2-deoxy-alpha-D-glucopyranoside ligase (409 aa).

Cys25 contributes to the Zn(2+) binding site. L-cysteinyl-5'-AMP contacts are provided by residues 25-28 (CGIT), Thr40, and 63-65 (NVT). The 'HIGH' region motif lies at 27–37 (ITPYDATHIGH). The short motif at 179–184 (ERGGDP) is the 'ERGGDP' region element. Trp219 is an L-cysteinyl-5'-AMP binding site. Zn(2+) is bound at residue Cys223. L-cysteinyl-5'-AMP is bound at residue 241-243 (GSD). His248 is a binding site for Zn(2+). Position 274 (Val274) interacts with L-cysteinyl-5'-AMP. The 'KMSKS' region signature appears at 280 to 284 (KMSKS).

The protein belongs to the class-I aminoacyl-tRNA synthetase family. MshC subfamily. As to quaternary structure, monomer. The cofactor is Zn(2+).

It catalyses the reaction 1D-myo-inositol 2-amino-2-deoxy-alpha-D-glucopyranoside + L-cysteine + ATP = 1D-myo-inositol 2-(L-cysteinylamino)-2-deoxy-alpha-D-glucopyranoside + AMP + diphosphate + H(+). Its function is as follows. Catalyzes the ATP-dependent condensation of GlcN-Ins and L-cysteine to form L-Cys-GlcN-Ins. The protein is L-cysteine:1D-myo-inositol 2-amino-2-deoxy-alpha-D-glucopyranoside ligase of Clavibacter sepedonicus (Clavibacter michiganensis subsp. sepedonicus).